Consider the following 86-residue polypeptide: Putative membrane protein insertion efficiency factor (86 aa).

The protein belongs to the UPF0161 family.

Its subcellular location is the cell inner membrane. In terms of biological role, could be involved in insertion of integral membrane proteins into the membrane. The protein is Putative membrane protein insertion efficiency factor of Cellvibrio japonicus (strain Ueda107) (Pseudomonas fluorescens subsp. cellulosa).